The primary structure comprises 609 residues: DNA polymerase alpha subunit B (609 aa).

Serine 155 bears the Phosphoserine mark. Threonine 164 is modified (phosphothreonine). 2 positions are modified to phosphoserine: serine 166 and serine 168.

Belongs to the DNA polymerase alpha subunit B family. In terms of assembly, component of the alpha DNA polymerase complex (also known as the alpha DNA polymerase-primase complex) consisting of four subunits: the catalytic subunit PolA1, the regulatory subunit PolA2, and the primase complex subunits Prim1 and Prim2 respectively. PolA1 associates with the DNA primase complex before association with PolA2. Post-translationally, phosphorylated in embryos until cycle 13. Expressed in embryos (at protein level).

It localises to the nucleus. Accessory subunit of the DNA polymerase alpha complex (also known as the alpha DNA polymerase-primase complex) which plays an essential role in the initiation of DNA synthesis. During the S phase of the cell cycle, the DNA polymerase alpha complex (composed of a catalytic subunit PolA1, an accessory subunit PolA2 and two primase subunits, the catalytic subunit Prim1 and the regulatory subunit Prim2) is recruited to DNA at the replicative forks. The primase subunit of the polymerase alpha complex initiates DNA synthesis by oligomerising short RNA primers on both leading and lagging strands. These primers are initially extended by the polymerase alpha catalytic subunit and subsequently transferred to polymerase delta and polymerase epsilon for processive synthesis on the lagging and leading strand, respectively. This chain is DNA polymerase alpha subunit B, found in Drosophila melanogaster (Fruit fly).